The primary structure comprises 446 residues: Divalent metal cation transporter MntH (446 aa).

Transmembrane regions (helical) follow at residues 32–52, 59–79, 107–127, 139–159, 168–188, 210–230, 264–284, 303–323, 355–375, 381–401, and 420–440; these read FSFL…GNWI, AQFG…AMLL, AFVF…AEVI, IPLL…LFIM, AIVG…VFIA, GALF…NLYL, SIAF…FFGV, PLLG…ALLA, LITR…FNSN, QLLV…LIPL, and VNII…YLII.

The protein belongs to the NRAMP family.

It localises to the cell membrane. Functionally, h(+)-stimulated, divalent metal cation uptake system. The chain is Divalent metal cation transporter MntH from Staphylococcus saprophyticus subsp. saprophyticus (strain ATCC 15305 / DSM 20229 / NCIMB 8711 / NCTC 7292 / S-41).